A 100-amino-acid chain; its full sequence is Dromyosuppressin (100 aa).

An N-terminal signal peptide occupies residues 1–24; that stretch reads MSFAQFFVACCLAIVLLAVSNTRA. Residues 25-84 constitute a propeptide that is removed on maturation; the sequence is AVQGPPLCQSGIVEEMPPHIRKVCQALENSDQLTSALKSYINNEASALVANSDDLLKNYN. Phenylalanine amide is present on phenylalanine 96.

Belongs to the myosuppressin family.

The protein resides in the secreted. Functionally, myoinhibiting neuropeptide. The sequence is that of Dromyosuppressin from Drosophila melanogaster (Fruit fly).